We begin with the raw amino-acid sequence, 193 residues long: Xanthine phosphoribosyltransferase (193 aa).

Residues L20 and N27 each coordinate xanthine. 128–132 is a binding site for 5-phospho-alpha-D-ribose 1-diphosphate; it reads ASGGT. K156 is a binding site for xanthine.

The protein belongs to the purine/pyrimidine phosphoribosyltransferase family. Xpt subfamily. In terms of assembly, homodimer.

Its subcellular location is the cytoplasm. The enzyme catalyses XMP + diphosphate = xanthine + 5-phospho-alpha-D-ribose 1-diphosphate. It functions in the pathway purine metabolism; XMP biosynthesis via salvage pathway; XMP from xanthine: step 1/1. Its function is as follows. Converts the preformed base xanthine, a product of nucleic acid breakdown, to xanthosine 5'-monophosphate (XMP), so it can be reused for RNA or DNA synthesis. The sequence is that of Xanthine phosphoribosyltransferase from Deinococcus deserti (strain DSM 17065 / CIP 109153 / LMG 22923 / VCD115).